A 109-amino-acid chain; its full sequence is Cell division suppressor protein YneA (109 aa).

Residues 39–90 form the LysM domain; that stretch reads SEVNVNEGDSLWALADQYAGKSDMAKADFVSWVEKENNLSDGHVEAGDSVVI.

It belongs to the YneA family.

It is found in the cytoplasm. In terms of biological role, inhibits cell division during the SOS response. Affects a later stage of the cell division protein assembly, after the assembly of the Z ring, by probably suppressing recruitment of FtsL and/or DivIC to the division machinery. This chain is Cell division suppressor protein YneA, found in Listeria monocytogenes serovar 1/2a (strain ATCC BAA-679 / EGD-e).